Consider the following 477-residue polypeptide: Ribulose bisphosphate carboxylase large chain (477 aa).

Positions 1 to 2 are excised as a propeptide; it reads MS. Proline 3 carries the post-translational modification N-acetylproline. Lysine 14 carries the post-translational modification N6,N6,N6-trimethyllysine. Residues asparagine 123 and threonine 173 each coordinate substrate. Lysine 175 serves as the catalytic Proton acceptor. Substrate is bound at residue lysine 177. Mg(2+) is bound by residues lysine 201, aspartate 203, and glutamate 204. Residue lysine 201 is modified to N6-carboxylysine. Residue histidine 294 is the Proton acceptor of the active site. Substrate-binding residues include arginine 295, histidine 327, and serine 379.

The protein belongs to the RuBisCO large chain family. Type I subfamily. In terms of assembly, heterohexadecamer of 8 large chains and 8 small chains; disulfide-linked. The disulfide link is formed within the large subunit homodimers. The cofactor is Mg(2+). The disulfide bond which can form in the large chain dimeric partners within the hexadecamer appears to be associated with oxidative stress and protein turnover.

It localises to the plastid. Its subcellular location is the chloroplast. The enzyme catalyses 2 (2R)-3-phosphoglycerate + 2 H(+) = D-ribulose 1,5-bisphosphate + CO2 + H2O. It catalyses the reaction D-ribulose 1,5-bisphosphate + O2 = 2-phosphoglycolate + (2R)-3-phosphoglycerate + 2 H(+). In terms of biological role, ruBisCO catalyzes two reactions: the carboxylation of D-ribulose 1,5-bisphosphate, the primary event in carbon dioxide fixation, as well as the oxidative fragmentation of the pentose substrate in the photorespiration process. Both reactions occur simultaneously and in competition at the same active site. The protein is Ribulose bisphosphate carboxylase large chain of Nicotiana sylvestris (Wood tobacco).